The chain runs to 461 residues: MAKHERGLRFQPTGGSKAPQIPTGKKQRLSIERLANDGRGIAFFEGKTWFVLGALAGEEVEARVLGAHGKVVEARTERVFSASELRRPAPCQHAGRCGGCSVQHLPHNEQLALKQRMLAEQLSRVAGAEPEEWAAPLTGPEFGYRRRARIAVRWDSKAKKLEVGFRAAGSQDIVAISECPVLVQPLQPIMTRLPEMLRRLSKPQALGHVELFSGSSLAVLLRHMAPLSEADLTILKDFCAFHEAQLWLHGEGEPQPVDDAQSLGYHLEQWDLQLAYRPGDFIQVNAGVNEAMVAQALEWLKPTADERVLDLFCGLGNFALPLAKAAREVVAVEGVQTMVDRAAANAASNNLHNTKFFQADLSQPLTDAEWIGNGFSAVLLDPPRDGAFEVVRKLAALGAKRLVYVSCNPATLARDTVELIKQGYRLKRAGILDMFPQTAHVEAMALFEASQDGSSDPTGRP.

The segment at 1–26 (MAKHERGLRFQPTGGSKAPQIPTGKK) is disordered. In terms of domain architecture, TRAM spans 20 to 78 (QIPTGKKQRLSIERLANDGRGIAFFEGKTWFVLGALAGEEVEARVLGAHGKVVEARTER). [4Fe-4S] cluster contacts are provided by cysteine 91, cysteine 97, cysteine 100, and cysteine 179. Positions 283, 312, 317, 333, 360, and 381 each coordinate S-adenosyl-L-methionine. Cysteine 407 (nucleophile) is an active-site residue.

It belongs to the class I-like SAM-binding methyltransferase superfamily. RNA M5U methyltransferase family. RlmD subfamily.

It carries out the reaction uridine(1939) in 23S rRNA + S-adenosyl-L-methionine = 5-methyluridine(1939) in 23S rRNA + S-adenosyl-L-homocysteine + H(+). In terms of biological role, catalyzes the formation of 5-methyl-uridine at position 1939 (m5U1939) in 23S rRNA. This Pseudomonas fluorescens (strain Pf0-1) protein is 23S rRNA (uracil(1939)-C(5))-methyltransferase RlmD.